Reading from the N-terminus, the 153-residue chain is 3-hydroxyacyl-[acyl-carrier-protein] dehydratase FabZ (153 aa).

Residue His53 is part of the active site.

The protein belongs to the thioester dehydratase family. FabZ subfamily.

The protein localises to the cytoplasm. It carries out the reaction a (3R)-hydroxyacyl-[ACP] = a (2E)-enoyl-[ACP] + H2O. In terms of biological role, involved in unsaturated fatty acids biosynthesis. Catalyzes the dehydration of short chain beta-hydroxyacyl-ACPs and long chain saturated and unsaturated beta-hydroxyacyl-ACPs. The sequence is that of 3-hydroxyacyl-[acyl-carrier-protein] dehydratase FabZ from Lawsonia intracellularis (strain PHE/MN1-00).